Reading from the N-terminus, the 118-residue chain is Large ribosomal subunit protein bL19 (118 aa).

It belongs to the bacterial ribosomal protein bL19 family.

Its function is as follows. This protein is located at the 30S-50S ribosomal subunit interface and may play a role in the structure and function of the aminoacyl-tRNA binding site. The chain is Large ribosomal subunit protein bL19 from Levilactobacillus brevis (strain ATCC 367 / BCRC 12310 / CIP 105137 / JCM 1170 / LMG 11437 / NCIMB 947 / NCTC 947) (Lactobacillus brevis).